Consider the following 229-residue polypeptide: 3-isopropylmalate dehydratase small subunit (229 aa).

Positions 198–229 (LPVKREPEQPIESAREGEYPDWQGPLADRGII) are disordered. A compositionally biased stretch (basic and acidic residues) spans 200-215 (VKREPEQPIESAREGE).

This sequence belongs to the LeuD family. LeuD type 1 subfamily. Heterodimer of LeuC and LeuD.

The catalysed reaction is (2R,3S)-3-isopropylmalate = (2S)-2-isopropylmalate. It functions in the pathway amino-acid biosynthesis; L-leucine biosynthesis; L-leucine from 3-methyl-2-oxobutanoate: step 2/4. Catalyzes the isomerization between 2-isopropylmalate and 3-isopropylmalate, via the formation of 2-isopropylmaleate. The sequence is that of 3-isopropylmalate dehydratase small subunit from Bifidobacterium adolescentis (strain ATCC 15703 / DSM 20083 / NCTC 11814 / E194a).